A 264-amino-acid polypeptide reads, in one-letter code: Indole-3-glycerol phosphate synthase (264 aa).

This sequence belongs to the TrpC family.

It carries out the reaction 1-(2-carboxyphenylamino)-1-deoxy-D-ribulose 5-phosphate + H(+) = (1S,2R)-1-C-(indol-3-yl)glycerol 3-phosphate + CO2 + H2O. It participates in amino-acid biosynthesis; L-tryptophan biosynthesis; L-tryptophan from chorismate: step 4/5. This Xylella fastidiosa (strain M23) protein is Indole-3-glycerol phosphate synthase.